We begin with the raw amino-acid sequence, 381 residues long: cAMP-dependent protein kinase type I-beta regulatory subunit (381 aa).

Positions 1 to 136 (MASPSCFHSE…ALAKAISKNV (136 aa)) are dimerization and phosphorylation. Ser3 carries the post-translational modification Phosphoserine. 3'-nitrotyrosine is present on Tyr21. A disordered region spans residues 66–88 (LARQKSNSQCDSHDEEISPTPPN). Residues Ser77 and Ser83 each carry the phosphoserine modification. Residue Thr85 is modified to Phosphothreonine. Positions 96–100 (RRGGV) match the Pseudophosphorylation motif motif. Arg97 carries the post-translational modification Omega-N-methylarginine. Residues 137–254 (LFSH…SKVS), Glu202, Arg211, 255–381 (ILES…SLTV), Glu326, and Arg335 each bind 3',5'-cyclic AMP.

Belongs to the cAMP-dependent kinase regulatory chain family. The inactive holoenzyme is composed of two regulatory chains and two catalytic chains. Activation by cAMP releases the two active catalytic monomers and the regulatory dimer. Interacts with PRKX; regulates this cAMP-dependent protein kinase. Interacts with smAKAP; this interaction may target PRKAR1B to the plasma membrane. In terms of processing, the pseudophosphorylation site binds to the substrate-binding region of the catalytic chain, resulting in the inhibition of its activity. Abundant in brain and testis. No expression in lung, heart, liver, spleen, kidney and skeletal muscle.

Its subcellular location is the cell membrane. In terms of biological role, regulatory subunit of the cAMP-dependent protein kinases involved in cAMP signaling in cells. The chain is cAMP-dependent protein kinase type I-beta regulatory subunit (Prkar1b) from Rattus norvegicus (Rat).